The primary structure comprises 381 residues: Creatine kinase M-type (381 aa).

Positions 11-98 (KLNFKAEEEY…FDPIIQDRHG (88 aa)) constitute a Phosphagen kinase N-terminal domain. Residues 125-367 (YVLSSRVRTG…KLMVEMEKKL (243 aa)) enclose the Phosphagen kinase C-terminal domain. Residue 128 to 132 (SSRVR) coordinates ATP. At Ser-164 the chain carries Phosphoserine. A Phosphothreonine modification is found at Thr-166. Ser-178 carries the phosphoserine modification. Residue Thr-180 is modified to Phosphothreonine. Residue His-191 participates in ATP binding. Phosphoserine is present on Ser-199. ATP-binding residues include Arg-236 and Arg-292. Phosphothreonine is present on residues Thr-313 and Thr-322. ATP-binding positions include 320 to 325 (RGTGGV) and Asp-335. Ser-372 bears the Phosphoserine mark.

It belongs to the ATP:guanido phosphotransferase family. Dimer of identical or non-identical chains, which can be either B (brain type) or M (muscle type). With MM being the major form in skeletal muscle and myocardium, MB existing in myocardium, and BB existing in many tissues, especially brain.

The catalysed reaction is creatine + ATP = N-phosphocreatine + ADP + H(+). Functionally, reversibly catalyzes the transfer of phosphate between ATP and various phosphogens (e.g. creatine phosphate). Creatine kinase isoenzymes play a central role in energy transduction in tissues with large, fluctuating energy demands, such as skeletal muscle, heart, brain and spermatozoa. In Sus scrofa (Pig), this protein is Creatine kinase M-type (CKM).